We begin with the raw amino-acid sequence, 434 residues long: Histidinol dehydrogenase (434 aa).

Positions 130, 188, and 211 each coordinate NAD(+). Substrate-binding residues include Ser237, Gln259, and His262. The Zn(2+) site is built by Gln259 and His262. Active-site proton acceptor residues include Glu326 and His327. 4 residues coordinate substrate: His327, Asp360, Glu414, and His419. Residue Asp360 participates in Zn(2+) binding. Position 419 (His419) interacts with Zn(2+).

It belongs to the histidinol dehydrogenase family. As to quaternary structure, homodimer. It depends on Zn(2+) as a cofactor.

The catalysed reaction is L-histidinol + 2 NAD(+) + H2O = L-histidine + 2 NADH + 3 H(+). It participates in amino-acid biosynthesis; L-histidine biosynthesis; L-histidine from 5-phospho-alpha-D-ribose 1-diphosphate: step 9/9. Functionally, catalyzes the sequential NAD-dependent oxidations of L-histidinol to L-histidinaldehyde and then to L-histidine. This chain is Histidinol dehydrogenase, found in Salmonella choleraesuis (strain SC-B67).